Consider the following 298-residue polypeptide: Keratin-associated protein 10-11 (298 aa).

25 repeat units span residues 26 to 30 (CCEPP), 36 to 40 (CCAPA), 57 to 61 (CCQAA), 79 to 83 (CCQQS), 89 to 93 (CCTSS), 99 to 103 (CCVPV), 104 to 108 (CCKTV), 109 to 113 (CCKPV), 114 to 118 (CCVPV), 119 to 123 (CCGAA), 126 to 130 (CCRQS), 136 to 140 (CCASS), 146 to 150 (CCVPV), 151 to 155 (CCKPV), 156 to 160 (CCVST), 168 to 172 (CCQQS), 178 to 182 (CCTSS), 188 to 192 (CCVPV), 193 to 197 (CCKTV), 203 to 207 (CCVPV), 225 to 229 (CCTTS), 230 to 234 (CCRPS), 249 to 253 (CCVPV), 256 to 260 (CCAPT), and 267 to 271 (CCRPA). The 25 X 5 AA repeats of C-C-X(3) stretch occupies residues 26 to 271 (CCEPPCSAPS…SCQSSCCRPA (246 aa)).

Belongs to the KRTAP type 10 family. Interacts with hair keratins. As to expression, restricted to a narrow region of the hair fiber cuticle, lying approximately 20 cell layers above the apex of the dermal papilla of the hair root; not detected in any other tissues.

Functionally, in the hair cortex, hair keratin intermediate filaments are embedded in an interfilamentous matrix, consisting of hair keratin-associated proteins (KRTAP), which are essential for the formation of a rigid and resistant hair shaft through their extensive disulfide bond cross-linking with abundant cysteine residues of hair keratins. The matrix proteins include the high-sulfur and high-glycine-tyrosine keratins. The sequence is that of Keratin-associated protein 10-11 (KRTAP10-11) from Homo sapiens (Human).